Reading from the N-terminus, the 102-residue chain is Small ribosomal subunit protein uS10 (102 aa).

Belongs to the universal ribosomal protein uS10 family. As to quaternary structure, part of the 30S ribosomal subunit.

Functionally, involved in the binding of tRNA to the ribosomes. This chain is Small ribosomal subunit protein uS10, found in Thermotoga neapolitana (strain ATCC 49049 / DSM 4359 / NBRC 107923 / NS-E).